Consider the following 456-residue polypeptide: RuvB-like 1 (456 aa).

The segment at 1 to 20 (MKIEEVKSTTKTQRIASHSH) is disordered. 70 to 77 (GPPGTGKT) serves as a coordination point for ATP.

It belongs to the RuvB family. Forms homohexameric rings. Can form a dodecamer with ruvbl2 made of two stacked hexameric rings. Is a component of the RNA polymerase II holoenzyme complex. Component of the chromatin-remodeling Ino80 complex. Component of some MLL1/MLL complex.

Its subcellular location is the nucleus. It localises to the dynein axonemal particle. It carries out the reaction ATP + H2O = ADP + phosphate + H(+). Functionally, has single-stranded DNA-stimulated ATPase and ATP-dependent DNA helicase (3' to 5') activity suggesting a role in nuclear processes such as recombination and transcription. Proposed core component of the chromatin remodeling Ino80 complex which exhibits DNA- and nucleosome-activated ATPase activity and catalyzes ATP-dependent nucleosome sliding. May act as a negative regulator of embryonic heart growth. This chain is RuvB-like 1 (ruvbl1), found in Danio rerio (Zebrafish).